A 129-amino-acid polypeptide reads, in one-letter code: Lysozyme C (129 aa).

The 129-residue stretch at 1–129 folds into the C-type lysozyme domain; sequence KVFSKCELAH…LSEYLASCNL (129 aa). 4 disulfide bridges follow: Cys-6–Cys-127, Cys-30–Cys-115, Cys-65–Cys-80, and Cys-76–Cys-94. Catalysis depends on residues Glu-35 and Asp-53. 5 residues coordinate Ca(2+): Lys-82, Asp-85, Asn-87, Asp-90, and Asp-91.

Belongs to the glycosyl hydrolase 22 family. Monomer. Ca(2+) is required as a cofactor.

It catalyses the reaction Hydrolysis of (1-&gt;4)-beta-linkages between N-acetylmuramic acid and N-acetyl-D-glucosamine residues in a peptidoglycan and between N-acetyl-D-glucosamine residues in chitodextrins.. In terms of biological role, lysozymes have primarily a bacteriolytic function; those in tissues and body fluids are associated with the monocyte-macrophage system and enhance the activity of immunoagents. In Equus asinus (Donkey), this protein is Lysozyme C (LYZ).